The sequence spans 381 residues: E3 ubiquitin-protein ligase KCMF1 (381 aa).

Ser-2 is subject to N-acetylserine. Phosphoserine is present on Ser-2. Residues 4–60 (HEGVSCDACLKGNFRGRRYKCLICYDYDLCASCYESGATTTRHTTDHPMQCILTRVD) form a ZZ-type zinc finger. Residues Cys-9, Cys-12, Cys-24, Cys-27, Cys-33, Cys-36, His-46, and His-50 each contribute to the Zn(2+) site. Residues 78 to 101 (FTCPYCGKMGYTETSLQEHVTSEH) form a C2H2-type zinc finger. The interval 154-194 (MFHPGRGLGGPRARRSNMHFTSSSTGGLSSSQSSYSPSSRE) is disordered. Phosphoserine occurs at positions 169, 189, and 212. The span at 175–192 (SSSTGGLSSSQSSYSPSS) shows a compositional bias: low complexity. Positions 224-259 (ASQLQQLQMQLQLERQHAQAARQQLETARNASRRTN) form a coiled coil. 2 positions are modified to phosphoserine: Ser-335 and Ser-336.

This sequence belongs to the KCMF1 family. In terms of assembly, component of the SIFI complex, composed of KCMF1, UBR4 and calmodulin (CALM1, CALM2 or CALM3). In terms of tissue distribution, testis, liver, kidney, heart and skeletal muscle.

The protein localises to the cytoplasm. The protein resides in the late endosome. It localises to the lysosome. It carries out the reaction S-ubiquitinyl-[E2 ubiquitin-conjugating enzyme]-L-cysteine + [acceptor protein]-L-lysine = [E2 ubiquitin-conjugating enzyme]-L-cysteine + N(6)-ubiquitinyl-[acceptor protein]-L-lysine.. It functions in the pathway protein modification; protein ubiquitination. Its function is as follows. E3 ubiquitin-protein ligase which accepts ubiquitin from an E2 ubiquitin-conjugating enzyme and then transfers it to targeted substrates, promoting their degradation by the proteasome. Together with UBR4, component of the N-end rule pathway: ubiquitinates proteins bearing specific N-terminal residues that are destabilizing according to the N-end rule, leading to their degradation. Does not ubiquitinate proteins that are acetylated at the N-terminus. Together with UBR4, part of a protein quality control pathway that catalyzes ubiquitination and degradation of proteins that have been oxidized in response to reactive oxygen species (ROS): recognizes proteins with an Arg-CysO3(H) degron at the N-terminus, and mediates assembly of heterotypic 'Lys-63'-/'Lys-27'-linked branched ubiquitin chains on oxidized proteins, leading to their degradation by autophagy. Catalytic component of the SIFI complex, a multiprotein complex required to inhibit the mitochondrial stress response after a specific stress event has been resolved: ubiquitinates and degrades (1) components of the HRI-mediated signaling of the integrated stress response, such as DELE1 and EIF2AK1/HRI, as well as (2) unimported mitochondrial precursors. Within the SIFI complex, UBR4 initiates ubiquitin chain that are further elongated or branched by KCMF1. The polypeptide is E3 ubiquitin-protein ligase KCMF1 (Mus musculus (Mouse)).